Reading from the N-terminus, the 424-residue chain is Homeobox-containing protein 1 (424 aa).

An HNF-p1 domain is found at 1–30 (MLFTIEQLELIKKLQHTGMSSDQLLKAFGE). The 97-residue stretch at 103–199 (SQRTPMKEIT…PNKLAAFLAD (97 aa)) folds into the POU-specific atypical domain. The homeobox DNA-binding region spans 215-291 (QRRERYVFRP…NKRKELRRRS (77 aa)). Positions 291–345 (SAEASAASTSSASSSASSTANHDSVSVSSMSPRDEETSSRNTTPETAISPSPAVS) are disordered. Positions 293 to 310 (EASAASTSSASSSASSTA) are enriched in low complexity. 2 stretches are compositionally biased toward polar residues: residues 311–321 (NHDSVSVSSMS) and 329–345 (SRNTTPETAISPSPAVS).

It belongs to the HMBOX1 homeobox family. In terms of tissue distribution, expressed in both AWC neurons. Also expressed in the FLP mechanosensory neurons.

The protein resides in the nucleus. Transcriptional repressor which maintains cell fate asymmetry of AWC neurons in adults by repressing the expression of multiple AWC (OFF) genes, including srsx-3 in the AWC (ON) neuron. The chain is Homeobox-containing protein 1 from Caenorhabditis elegans.